A 392-amino-acid chain; its full sequence is Membrane cofactor protein (392 aa).

The signal sequence occupies residues 1-34 (MEPPGRRECPFPSWRFPGLLLAAMVLLLYSFSDA). Intrachain disulfides connect Cys-35–Cys-80, Cys-64–Cys-94, Cys-99–Cys-141, Cys-127–Cys-157, Cys-162–Cys-210, Cys-191–Cys-223, Cys-228–Cys-270, and Cys-256–Cys-283. 4 consecutive Sushi domains span residues 35-96 (CEEP…ACYR), 97-159 (ETCP…ICEK), 160-225 (VLCT…ECKV), and 226-285 (VKCR…KCLK). The Extracellular portion of the chain corresponds to 35–343 (CEEPPTFEAM…PEEGILDSLD (309 aa)). N-linked (GlcNAc...) asparagine glycosylation is found at Asn-83 and Asn-114. O-linked (GalNAc...) threonine glycosylation occurs at Thr-163. Asn-273 carries an N-linked (GlcNAc...) asparagine glycan. O-linked (GalNAc...) serine glycosylation is found at Ser-290 and Ser-291. Low complexity predominate over residues 291 to 315 (STKPPALSHSVSTSSTTKSPASSAS). A disordered region spans residues 291–328 (STKPPALSHSVSTSSTTKSPASSASGPRPTYKPPVSNY). The O-linked (GalNAc...) threonine glycan is linked to Thr-292. O-linked (GalNAc...) serine glycans are attached at residues Ser-298, Ser-300, and Ser-302. Thr-303 carries O-linked (GalNAc...) threonine glycosylation. O-linked (GalNAc...) serine glycans are attached at residues Ser-304 and Ser-305. O-linked (GalNAc...) threonine glycans are attached at residues Thr-306 and Thr-307. 4 O-linked (GalNAc...) serine glycosylation sites follow: Ser-309, Ser-312, Ser-313, and Ser-315. O-linked (GalNAc...) threonine glycosylation is present at Thr-320. Tyr-321 is subject to Phosphotyrosine. Ser-326 carries O-linked (GalNAc...) serine glycosylation. Residues Asp-340, Ile-354, Val-355, Leu-369, Gln-370, and His-384 each carry the phosphotyrosine modification. Residues 344–366 (VWVIAVIVIAIVVGVAVICVVPY) traverse the membrane as a helical segment. Residues 367–392 (RYLQRRKKKGTYLTDETHREVKFTSL) lie on the Cytoplasmic side of the membrane.

In terms of assembly, interacts with C3b. Interacts with C4b. Interacts with moesin/MSN. As to quaternary structure, (Microbial infection) Interacts (via N-terminus) with measles virus H protein; this interaction allows attachment and viral entry of vaccine and laboratory-adapted strains. (Microbial infection) Interacts with human herpesvirus 6 GH protein. In terms of assembly, (Microbial infection) Interacts with human adenovirus B/D fiber protein. As to quaternary structure, (Microbial infection) Binds to Streptococcus pyogenes M protein and to type IV pili from Neisseria. Post-translationally, N-glycosylated on Asn-83; Asn-114 and Asn-273 in most tissues, but probably less N-glycosylated in testis. N-glycosylation on Asn-114 and Asn-273 is required for cytoprotective function. N-glycosylation on Asn-114 is required for Measles virus binding. N-glycosylation on Asn-273 is required for Neisseria binding. N-glycosylation is not required for human adenovirus binding. In terms of processing, extensively O-glycosylated in the Ser/Thr-rich domain. O-glycosylation is required for Neisseria binding but not for Measles virus or human adenovirus binding. In epithelial cells, isoforms B/D/F/H/J/L/3 are phosphorylated by YES1 in response to infection by Neisseria gonorrhoeae; which promotes infectivity. In T-cells, these isoforms may be phosphorylated by LCK. As to expression, expressed by all cells except erythrocytes.

The protein resides in the cytoplasmic vesicle. The protein localises to the secretory vesicle. Its subcellular location is the acrosome inner membrane. Functionally, acts as a cofactor for complement factor I, a serine protease which protects autologous cells against complement-mediated injury by cleaving C3b and C4b deposited on host tissue. May be involved in the fusion of the spermatozoa with the oocyte during fertilization. Also acts as a costimulatory factor for T-cells which induces the differentiation of CD4+ into T-regulatory 1 cells. T-regulatory 1 cells suppress immune responses by secreting interleukin-10, and therefore are thought to prevent autoimmunity. In terms of biological role, (Microbial infection) A number of viral and bacterial pathogens seem to bind MCP in order to exploit its immune regulation property and directly induce an immunosuppressive phenotype in T-cells. Its function is as follows. (Microbial infection) Acts as a receptor for Adenovirus subgroup B2 and Ad3. (Microbial infection) Acts as a receptor for cultured Measles virus. Functionally, (Microbial infection) Acts as a receptor for Herpesvirus 6/HHV-6. In terms of biological role, (Microbial infection) May act as a receptor for pathogenic bacteria Neisseria and Streptococcus pyogenes. This chain is Membrane cofactor protein (CD46), found in Homo sapiens (Human).